The following is a 441-amino-acid chain: Deoxyguanosinetriphosphate triphosphohydrolase-like protein (441 aa).

The disordered stretch occupies residues 1–27; it reads MTSSVWQERRHGEDKQRRNDHRSPYQR. Residues 7–27 are compositionally biased toward basic and acidic residues; sequence QERRHGEDKQRRNDHRSPYQR. Residues 59-252 enclose the HD domain; sequence RLTHSLEVSQ…MELADDIAYA (194 aa).

The protein belongs to the dGTPase family. Type 2 subfamily.

The polypeptide is Deoxyguanosinetriphosphate triphosphohydrolase-like protein (Shewanella oneidensis (strain ATCC 700550 / JCM 31522 / CIP 106686 / LMG 19005 / NCIMB 14063 / MR-1)).